The primary structure comprises 425 residues: UDP-N-acetylglucosamine 1-carboxyvinyltransferase (425 aa).

Residue 23 to 24 (KN) participates in phosphoenolpyruvate binding. Position 100 (R100) interacts with UDP-N-acetyl-alpha-D-glucosamine. C124 serves as the catalytic Proton donor. C124 is subject to 2-(S-cysteinyl)pyruvic acid O-phosphothioketal. UDP-N-acetyl-alpha-D-glucosamine is bound by residues 169–172 (KVSV), D313, and V335.

This sequence belongs to the EPSP synthase family. MurA subfamily.

The protein localises to the cytoplasm. It carries out the reaction phosphoenolpyruvate + UDP-N-acetyl-alpha-D-glucosamine = UDP-N-acetyl-3-O-(1-carboxyvinyl)-alpha-D-glucosamine + phosphate. It functions in the pathway cell wall biogenesis; peptidoglycan biosynthesis. Cell wall formation. Adds enolpyruvyl to UDP-N-acetylglucosamine. This chain is UDP-N-acetylglucosamine 1-carboxyvinyltransferase, found in Wolbachia pipientis subsp. Culex pipiens (strain wPip).